Consider the following 529-residue polypeptide: Probable serine/threonine protein phosphatase 2A regulatory subunit B''epsilon (529 aa).

Positions 60-110 (KSGTPTNKSKNLPSVFLSSSTPPLSPRSSSGSPRFSRQRTSPPSLHSPLRS) are disordered. Over residues 71–109 (LPSVFLSSSTPPLSPRSSSGSPRFSRQRTSPPSLHSPLR) the composition is skewed to low complexity. In terms of domain architecture, EF-hand spans 381–416 (SSEPSLEYWFKCVDLDGNGVITSNEMQFFFEEQLHR). Asp-394, Asp-396, Asn-398, and Glu-405 together coordinate Ca(2+). The interval 507–529 (EEDVDEVSNGSADVWDEPLEPPF) is disordered. Residues 520–529 (VWDEPLEPPF) are compositionally biased toward acidic residues.

In terms of assembly, PP2A consists of a common heterodimeric core enzyme, composed of a 36 kDa catalytic subunit (subunit C) and a 65 kDa constant regulatory subunit (PR65 or subunit A), that associates with a variety of regulatory subunits. Proteins that associate with the core dimer include three families of regulatory subunits B (the R2/B/PR55/B55, R3/B''/PR72/PR130/PR59 and R5/B'/B56 families) and cell signaling molecules.

Probable regulatory subunit of type 2A protein phosphatase. The chain is Probable serine/threonine protein phosphatase 2A regulatory subunit B''epsilon (B''EPSILON) from Arabidopsis thaliana (Mouse-ear cress).